The primary structure comprises 143 residues: MLLNTVQPGVGAKHAKRRVGRGIGSGLGKTCGRGHKGQKSRAGGFHKVGFEGGQMPLQRRLPKRGFKSLTARFVCEVRLSELNLLPVDEIDLLALKQAGLVAAQAQVAKVVLSGKVERAVKLRGISVTAGARAAIEAAGGSIE.

A disordered region spans residues 1-45; it reads MLLNTVQPGVGAKHAKRRVGRGIGSGLGKTCGRGHKGQKSRAGGF. A compositionally biased stretch (gly residues) spans 21–31; that stretch reads RGIGSGLGKTC.

This sequence belongs to the universal ribosomal protein uL15 family. As to quaternary structure, part of the 50S ribosomal subunit.

Binds to the 23S rRNA. In Chromobacterium violaceum (strain ATCC 12472 / DSM 30191 / JCM 1249 / CCUG 213 / NBRC 12614 / NCIMB 9131 / NCTC 9757 / MK), this protein is Large ribosomal subunit protein uL15.